The following is a 533-amino-acid chain: Intestinal-type alkaline phosphatase (533 aa).

An N-terminal signal peptide occupies residues 1–19 (MQGACVLLLLGLHLQLSLG). D61 is a Mg(2+) binding site. Residues D61 and S111 each contribute to the Zn(2+) site. S111 functions as the Phosphoserine intermediate in the catalytic mechanism. A disulfide bridge links C140 with C202. S174 is a Mg(2+) binding site. A Ca(2+)-binding site is contributed by E235. N-linked (GlcNAc...) asparagine glycosylation is present at N268. Residues F288, E289, and D304 each contribute to the Ca(2+) site. E330 serves as a coordination point for Mg(2+). Zn(2+) is bound by residues D335, H339, D376, and H377. The N-linked (GlcNAc...) asparagine glycan is linked to N429. H451 contacts Zn(2+). A disulfide bridge connects residues C486 and C493. The GPI-anchor amidated aspartate moiety is linked to residue D506. Positions 507 to 533 (AAHLAASPPPLALLAGAMLLLLAPTLY) are cleaved as a propeptide — removed in mature form.

Belongs to the alkaline phosphatase family. In terms of assembly, homodimer. Mg(2+) serves as cofactor. Requires Zn(2+) as cofactor. It depends on Ca(2+) as a cofactor.

It is found in the cell membrane. The catalysed reaction is a phosphate monoester + H2O = an alcohol + phosphate. Its function is as follows. Alkaline phosphatase that can hydrolyze various phosphate compounds. This Bos taurus (Bovine) protein is Intestinal-type alkaline phosphatase (ALPI).